The chain runs to 1363 residues: Kinesin-like protein kif7 (1363 aa).

Positions A15–I347 constitute a Kinesin motor domain. G94–T101 contacts ATP. Coiled-coil stretches lie at residues E358–R385 and E491–Q552. A compositionally biased stretch (polar residues) spans D603–C622. The disordered stretch occupies residues D603–K642. Positions E623–R640 are enriched in basic and acidic residues. 2 coiled-coil regions span residues L714–E1068 and D1116–M1225. Residues I1314–T1346 are disordered. Polar residues predominate over residues G1318 to P1331.

This sequence belongs to the TRAFAC class myosin-kinesin ATPase superfamily. Kinesin family. KIF27 subfamily. As to quaternary structure, binds microtubules. Interacts with gli1 and sufu.

It is found in the cytoplasm. It localises to the cytoskeleton. The protein localises to the cell projection. Its subcellular location is the cilium. In terms of biological role, acts downstream of smo as an intracellular repressor of hedgehog signaling pathway, mainly through the suppression of gli1 activity. This negative regulatory effect is enhanced in conjunction with the suppressor of fused (sufu) protein. Positively regulates gli2a activity by promoting its dissociation from sufu. Involved in the regulation of microtubular dynamics. This chain is Kinesin-like protein kif7 (kif7), found in Danio rerio (Zebrafish).